Reading from the N-terminus, the 177-residue chain is Alkyl hydroperoxide reductase AhpD (177 aa).

Cys-130 acts as the Proton donor in catalysis. An intrachain disulfide couples Cys-130 to Cys-133. Cys-133 serves as the catalytic Cysteine sulfenic acid (-SOH) intermediate.

Belongs to the AhpD family. In terms of assembly, homotrimer.

The enzyme catalyses N(6)-[(R)-dihydrolipoyl]-L-lysyl-[lipoyl-carrier protein] + a hydroperoxide = N(6)-[(R)-lipoyl]-L-lysyl-[lipoyl-carrier protein] + an alcohol + H2O. In terms of biological role, antioxidant protein with alkyl hydroperoxidase activity. Required for the reduction of the AhpC active site cysteine residues and for the regeneration of the AhpC enzyme activity. The chain is Alkyl hydroperoxide reductase AhpD from Corynebacterium aurimucosum (strain ATCC 700975 / DSM 44827 / CIP 107346 / CN-1) (Corynebacterium nigricans).